The following is a 281-amino-acid chain: NADH-cytochrome b5 reductase 1 (281 aa).

Residues 2–22 (VPGKFIFTATFVLLCTIIAVV) traverse the membrane as a helical segment. Residues 37-141 (EKLQEFPLVA…RGPKGFYHYQ (105 aa)) form the FAD-binding FR-type domain. FAD-binding positions include 121–136 (AQLN…GPKG) and 147–179 (EIGM…KVSL).

It belongs to the flavoprotein pyridine nucleotide cytochrome reductase family. Monomer. Component of the 2-(3-amino-3-carboxypropyl)histidine synthase complex composed of DPH1, DPH2, DPH3 and a NADH-dependent reductase, predominantly CBR1. It depends on FAD as a cofactor.

It localises to the mitochondrion outer membrane. It carries out the reaction 2 Fe(III)-[cytochrome b5] + NADH = 2 Fe(II)-[cytochrome b5] + NAD(+) + H(+). The catalysed reaction is 2 Fe(3+)-[Dph3] + NADH = 2 Fe(2+)-[Dph3] + NAD(+) + H(+). It functions in the pathway protein modification; peptidyl-diphthamide biosynthesis. Its function is as follows. NADH-dependent reductase for DPH3 and cytochrome b5. Required for the first step of diphthamide biosynthesis, a post-translational modification of histidine which occurs in elongation factor 2. DPH1 and DPH2 transfer a 3-amino-3-carboxypropyl (ACP) group from S-adenosyl-L-methionine (SAM) to a histidine residue, the reaction is assisted by a reduction system comprising DPH3 and a NADH-dependent reductase, predominantly CBR1. By reducing DPH3, also involved in the formation of the tRNA wobble base modification mcm5s 2U (5-methoxycarbonylmethyl-2-thiouridine), mediated by the elongator complex. The cytochrome b5/NADH cytochrome b5 reductase electron transfer system supports the catalytic activity of several sterol biosynthetic enzymes. The chain is NADH-cytochrome b5 reductase 1 (CBR1) from Kluyveromyces lactis (strain ATCC 8585 / CBS 2359 / DSM 70799 / NBRC 1267 / NRRL Y-1140 / WM37) (Yeast).